A 466-amino-acid polypeptide reads, in one-letter code: Citrate synthase, mitochondrial (466 aa).

Residues Met-1–Ser-27 constitute a mitochondrion transit peptide. The short motif at Ala-2–Leu-21 is the SIFI-degron element. Lys-57 is modified (N6-succinyllysine). Residue Lys-76 is modified to N6-acetyllysine; alternate. An N6-succinyllysine; alternate modification is found at Lys-76. N6-succinyllysine occurs at positions 103 and 193. The active site involves His-301. N6-acetyllysine; alternate is present on residues Lys-321 and Lys-327. N6-succinyllysine; alternate occurs at positions 321 and 327. His-347 is an active-site residue. Arg-356 lines the oxaloacetate pocket. An N6-acetyllysine; alternate modification is found at Lys-375. Lys-375 carries the post-translational modification N6-succinyllysine; alternate. Lys-382 carries the N6-acetyllysine modification. Lys-393 carries the N6-acetyllysine; alternate modification. N6-succinyllysine; alternate is present on Lys-393. Lys-395 is modified (N6,N6,N6-trimethyllysine). Residue Asp-402 is part of the active site. Arg-428 and Arg-448 together coordinate oxaloacetate. An N6-succinyllysine modification is found at Lys-450. An N6-acetyllysine; alternate modification is found at Lys-459. At Lys-459 the chain carries N6-succinyllysine; alternate.

This sequence belongs to the citrate synthase family. Homodimer. In terms of processing, methylated. Trimethylation at Lys-395 by CSKMT decreases citrate synthase activity. In response to mitochondrial stress, the precursor protein is ubiquitinated by the SIFI complex in the cytoplasm before mitochondrial import, leading to its degradation. Within the SIFI complex, UBR4 initiates ubiquitin chain that are further elongated or branched by KCMF1.

It is found in the mitochondrion matrix. The catalysed reaction is oxaloacetate + acetyl-CoA + H2O = citrate + CoA + H(+). The protein operates within carbohydrate metabolism; tricarboxylic acid cycle; isocitrate from oxaloacetate: step 1/2. Functionally, key enzyme of the Krebs tricarboxylic acid cycle which catalyzes the synthesis of citrate from acetyl coenzyme A and oxaloacetate. The chain is Citrate synthase, mitochondrial (CS) from Macaca fascicularis (Crab-eating macaque).